The chain runs to 236 residues: uncharacterized protein (236 aa).

This is an uncharacterized protein from Escherichia coli O157:H7.